Here is a 394-residue protein sequence, read N- to C-terminus: NAD(P)H-quinone oxidoreductase subunit H (394 aa).

It belongs to the complex I 49 kDa subunit family. As to quaternary structure, NDH-1 can be composed of about 15 different subunits; different subcomplexes with different compositions have been identified which probably have different functions.

The protein localises to the cellular thylakoid membrane. It carries out the reaction a plastoquinone + NADH + (n+1) H(+)(in) = a plastoquinol + NAD(+) + n H(+)(out). The enzyme catalyses a plastoquinone + NADPH + (n+1) H(+)(in) = a plastoquinol + NADP(+) + n H(+)(out). NDH-1 shuttles electrons from an unknown electron donor, via FMN and iron-sulfur (Fe-S) centers, to quinones in the respiratory and/or the photosynthetic chain. The immediate electron acceptor for the enzyme in this species is believed to be plastoquinone. Couples the redox reaction to proton translocation, and thus conserves the redox energy in a proton gradient. Cyanobacterial NDH-1 also plays a role in inorganic carbon-concentration. In Nostoc sp. (strain PCC 7120 / SAG 25.82 / UTEX 2576), this protein is NAD(P)H-quinone oxidoreductase subunit H.